Consider the following 197-residue polypeptide: UPF0314 protein R03235 (197 aa).

Helical transmembrane passes span 16 to 36 and 152 to 172; these read ALWL…QHLM and LPVA…GYMV.

This sequence belongs to the UPF0314 family.

The protein localises to the cell membrane. This chain is UPF0314 protein R03235, found in Rhizobium meliloti (strain 1021) (Ensifer meliloti).